The chain runs to 539 residues: MAKDPGRVLIFDTTLRDGEQSPGASLNLEEKLAIAQQLARLGVDVIEAGFPFASPGDFAAVQKIAENVGGEEGPIICGLSRASKPDIKACANAIAPAPKKRIHTFIATSDIHLEHKLRKSRKEVLDIVPDMVGYAKSFVDDVEFSCEDAARSDLDFLYEVIELAISSGANTINIPDTVGYITPSEFGDLILNINENVPNINEAVLSVHGHNDLGLAVANFLEAVKNGARQLECTINGIGERAGNAALEELIMALHVRRSYFNPFFGRPPESPTPLTAVRTEEITKSSRLVSNLTGMVVQPNKAIVGANAFAHESGIHQDGVLKNRLTYEIIDAKTVGLSDNKISLGKLSGRSAVRARLEDLGYDLNREDLNDAFARFKDLADRKREITDRDLEAIVSEQVQLPEALFQLKLVQVSCGTSLMPTATVTVVGEDGEEKTAVSLGTGPVDAVVRALDSLTEEPNELIEFSVKSVTEGIDALGEVTIRIRRDGNLFSGHSADTDVVVAAAQAYINALNRLVAAHGRKSIHPQHDLAKVDKKGI.

Residues 8 to 269 (VLIFDTTLRD…YFNPFFGRPP (262 aa)) form the Pyruvate carboxyltransferase domain. Positions 17, 208, 210, and 244 each coordinate Mn(2+). The segment at 408–539 (QLKLVQVSCG…DLAKVDKKGI (132 aa)) is regulatory domain.

This sequence belongs to the alpha-IPM synthase/homocitrate synthase family. LeuA type 1 subfamily. Homodimer. It depends on Mn(2+) as a cofactor.

It is found in the cytoplasm. The enzyme catalyses 3-methyl-2-oxobutanoate + acetyl-CoA + H2O = (2S)-2-isopropylmalate + CoA + H(+). It participates in amino-acid biosynthesis; L-leucine biosynthesis; L-leucine from 3-methyl-2-oxobutanoate: step 1/4. Its function is as follows. Catalyzes the condensation of the acetyl group of acetyl-CoA with 3-methyl-2-oxobutanoate (2-ketoisovalerate) to form 3-carboxy-3-hydroxy-4-methylpentanoate (2-isopropylmalate). In Prochlorococcus marinus (strain NATL1A), this protein is 2-isopropylmalate synthase.